A 241-amino-acid chain; its full sequence is Probable 2-phosphosulfolactate phosphatase (241 aa).

The protein belongs to the ComB family. Requires Mg(2+) as cofactor.

It catalyses the reaction (2R)-O-phospho-3-sulfolactate + H2O = (2R)-3-sulfolactate + phosphate. The chain is Probable 2-phosphosulfolactate phosphatase from Microcystis aeruginosa (strain NIES-843 / IAM M-2473).